Reading from the N-terminus, the 228-residue chain is Adenosylcobinamide-GDP ribazoletransferase (228 aa).

6 helical membrane passes run 24–44 (VWML…ILYL), 50–70 (NVLS…DGLA), 96–116 (IAGT…LFSA), 117–137 (PFYS…LALA), 159–176 (VFLG…ILLY), and 181–198 (IFAL…KISL).

The protein belongs to the CobS family. It depends on Mg(2+) as a cofactor.

Its subcellular location is the cell membrane. It carries out the reaction alpha-ribazole + adenosylcob(III)inamide-GDP = adenosylcob(III)alamin + GMP + H(+). The catalysed reaction is alpha-ribazole 5'-phosphate + adenosylcob(III)inamide-GDP = adenosylcob(III)alamin 5'-phosphate + GMP + H(+). The protein operates within cofactor biosynthesis; adenosylcobalamin biosynthesis; adenosylcobalamin from cob(II)yrinate a,c-diamide: step 7/7. Functionally, joins adenosylcobinamide-GDP and alpha-ribazole to generate adenosylcobalamin (Ado-cobalamin). Also synthesizes adenosylcobalamin 5'-phosphate from adenosylcobinamide-GDP and alpha-ribazole 5'-phosphate. In Pyrococcus furiosus (strain ATCC 43587 / DSM 3638 / JCM 8422 / Vc1), this protein is Adenosylcobinamide-GDP ribazoletransferase.